The sequence spans 219 residues: Thiopurine S-methyltransferase (219 aa).

4 residues coordinate S-adenosyl-L-methionine: Trp-10, Leu-45, Glu-66, and Arg-123.

The protein belongs to the class I-like SAM-binding methyltransferase superfamily. TPMT family.

The protein localises to the cytoplasm. It catalyses the reaction S-adenosyl-L-methionine + a thiopurine = S-adenosyl-L-homocysteine + a thiopurine S-methylether.. The protein is Thiopurine S-methyltransferase of Marinobacter nauticus (strain ATCC 700491 / DSM 11845 / VT8) (Marinobacter aquaeolei).